The chain runs to 585 residues: MAGUK p55 subfamily member 3 (585 aa).

2 L27 domains span residues Glu-6 to Ser-60 and Pro-61 to Val-118. Residues Ile-137 to Leu-212 form the PDZ domain. Residues Glu-226–Leu-296 enclose the SH3 domain. Ser-307 is subject to Phosphoserine. The Guanylate kinase-like domain occupies Pro-385 to Glu-570.

It belongs to the MAGUK family. As to quaternary structure, interacts with HTR2C; this interaction stabilizes the receptor at the plasma membrane and prevents the desensitization of the HTR2C receptor-mediated calcium response. Interacts with HTR2A. Interacts with HTR4. Interacts (via PDZ domain) with CADM1 (via C-terminus)Interacts (via PDZ domain) with CADM1; this interaction connects CADM1 with DLG1. Interacts (via Guanylate kinase-like domain) with PALS1. Interacts with DLG1 (via N-terminus); this interaction connects CADM1 with DLG1 and links CADM1 with the regulatory subunit of phosphoinositide-3-kinase (PI3K) by forming a multiprotein complex and participates in cell spreading. In terms of tissue distribution, expressed in retina (at protein level) at the subapical region (SAR) adjacent to adherens junctions at the OLM, and at the OPL.

It localises to the cell membrane. It is found in the apical cell membrane. The protein resides in the cell junction. The protein localises to the adherens junction. Its function is as follows. Participates in cell spreading through the phosphoinositide-3-kinase (PI3K) pathway by connecting CADM1 to DLG1 and the regulatory subunit of phosphoinositide-3-kinase (PI3K). Stabilizes HTR2C at the plasma membrane and prevents its desensitization. May participates in the maintenance of adherens junctions. The sequence is that of MAGUK p55 subfamily member 3 from Homo sapiens (Human).